The sequence spans 481 residues: NADH-quinone oxidoreductase subunit N (481 aa).

The next 13 helical transmembrane spans lie at Met9–Val29, Ala39–Ala59, Cys76–Ala96, Phe104–Phe124, Phe158–Gly178, Ala205–Val225, Pro232–Ala252, Ile265–Leu285, Leu293–Gly313, Ala318–Leu338, Phe359–Gly379, Val399–Phe419, and Leu443–Ala463.

The protein belongs to the complex I subunit 2 family. As to quaternary structure, NDH-1 is composed of 14 different subunits. Subunits NuoA, H, J, K, L, M, N constitute the membrane sector of the complex.

It is found in the cell inner membrane. It catalyses the reaction a quinone + NADH + 5 H(+)(in) = a quinol + NAD(+) + 4 H(+)(out). Functionally, NDH-1 shuttles electrons from NADH, via FMN and iron-sulfur (Fe-S) centers, to quinones in the respiratory chain. The immediate electron acceptor for the enzyme in this species is believed to be ubiquinone. Couples the redox reaction to proton translocation (for every two electrons transferred, four hydrogen ions are translocated across the cytoplasmic membrane), and thus conserves the redox energy in a proton gradient. The chain is NADH-quinone oxidoreductase subunit N from Anaplasma marginale (strain Florida).